A 274-amino-acid polypeptide reads, in one-letter code: Large ribosomal subunit protein uL2cz/uL2cy (274 aa).

Disordered stretches follow at residues 1–23 and 223–274; these read MAIH…SQVK and MNPV…RRSK.

The protein belongs to the universal ribosomal protein uL2 family. In terms of assembly, part of the 50S ribosomal subunit.

Its subcellular location is the plastid. It localises to the chloroplast. This chain is Large ribosomal subunit protein uL2cz/uL2cy (rpl2-A), found in Ranunculus macranthus (Large buttercup).